Here is a 173-residue protein sequence, read N- to C-terminus: Flavodoxin 2 (173 aa).

One can recognise a Flavodoxin-like domain in the interval 3 to 165 (MGLFYGSSTC…RIQSWCEQIL (163 aa)).

Belongs to the flavodoxin family. Requires FMN as cofactor.

Low-potential electron donor to a number of redox enzymes. The sequence is that of Flavodoxin 2 (fldB) from Escherichia coli O157:H7.